The primary structure comprises 265 residues: Type III pantothenate kinase (265 aa).

6–13 (DVGNTNIV) is a binding site for ATP. Substrate is bound by residues tyrosine 100 and 107–110 (GADR). The active-site Proton acceptor is aspartate 109. Position 129 (aspartate 129) interacts with K(+). Threonine 132 contributes to the ATP binding site. Residue threonine 184 participates in substrate binding.

The protein belongs to the type III pantothenate kinase family. In terms of assembly, homodimer. Requires NH4(+) as cofactor. The cofactor is K(+).

It is found in the cytoplasm. The catalysed reaction is (R)-pantothenate + ATP = (R)-4'-phosphopantothenate + ADP + H(+). It functions in the pathway cofactor biosynthesis; coenzyme A biosynthesis; CoA from (R)-pantothenate: step 1/5. Functionally, catalyzes the phosphorylation of pantothenate (Pan), the first step in CoA biosynthesis. This chain is Type III pantothenate kinase, found in Alkaliphilus oremlandii (strain OhILAs) (Clostridium oremlandii (strain OhILAs)).